Here is a 484-residue protein sequence, read N- to C-terminus: Ureidoglycolate hydrolase (484 aa).

The first 28 residues, 1–28 (MATSAAARFLAALAGAAVLLVLLGGAAG), serve as a signal peptide directing secretion. Residues H148, D159, E194, and H262 each coordinate Mn(2+). Substrate regions lie at residues 193-194 (EE) and 262-265 (HIEQ). The interval 284-399 (APASIKVEFE…LSEFKIINQD (116 aa)) is involved in dimerization. Substrate is bound by residues H298, N348, and R361. Residues 431–432 (YH) are substrate. A Mn(2+)-binding site is contributed by H456. H456 contributes to the substrate binding site.

This sequence belongs to the peptidase M20 family. Homodimer. Mn(2+) is required as a cofactor. Ni(2+) serves as cofactor. The cofactor is Co(2+).

The protein localises to the endoplasmic reticulum. It carries out the reaction (S)-ureidoglycolate + H2O + 2 H(+) = glyoxylate + 2 NH4(+) + CO2. It functions in the pathway nitrogen metabolism; (S)-allantoin degradation; glyoxylate from (S)-ureidoglycolate: step 1/1. Its function is as follows. Involved in the catabolism of purine nucleotides. The sequential activity of AAH, UGLYAH and UAH allows a complete purine breakdown without the intermediate generation of urea. This chain is Ureidoglycolate hydrolase, found in Oryza sativa subsp. japonica (Rice).